Reading from the N-terminus, the 74-residue chain is DNA-directed RNA polymerase subunit omega (74 aa).

It belongs to the RNA polymerase subunit omega family. The RNAP catalytic core consists of 2 alpha, 1 beta, 1 beta' and 1 omega subunit. When a sigma factor is associated with the core the holoenzyme is formed, which can initiate transcription.

The enzyme catalyses RNA(n) + a ribonucleoside 5'-triphosphate = RNA(n+1) + diphosphate. Its function is as follows. Promotes RNA polymerase assembly. Latches the N- and C-terminal regions of the beta' subunit thereby facilitating its interaction with the beta and alpha subunits. The protein is DNA-directed RNA polymerase subunit omega of Solidesulfovibrio magneticus (strain ATCC 700980 / DSM 13731 / RS-1) (Desulfovibrio magneticus).